The following is a 954-amino-acid chain: Glycine dehydrogenase (decarboxylating) (954 aa).

At Lys704 the chain carries N6-(pyridoxal phosphate)lysine.

Belongs to the GcvP family. The glycine cleavage system is composed of four proteins: P, T, L and H. Requires pyridoxal 5'-phosphate as cofactor.

The catalysed reaction is N(6)-[(R)-lipoyl]-L-lysyl-[glycine-cleavage complex H protein] + glycine + H(+) = N(6)-[(R)-S(8)-aminomethyldihydrolipoyl]-L-lysyl-[glycine-cleavage complex H protein] + CO2. The glycine cleavage system catalyzes the degradation of glycine. The P protein binds the alpha-amino group of glycine through its pyridoxal phosphate cofactor; CO(2) is released and the remaining methylamine moiety is then transferred to the lipoamide cofactor of the H protein. The chain is Glycine dehydrogenase (decarboxylating) from Rhizobium etli (strain CIAT 652).